The chain runs to 335 residues: DNA polymerase beta (335 aa).

Residue lysine 41 forms a Glycyl lysine isopeptide (Lys-Gly) (interchain with G-Cter in ubiquitin) linkage. Residue lysine 60 coordinates K(+). Position 60 (lysine 60) interacts with Na(+). Residue lysine 61 forms a Glycyl lysine isopeptide (Lys-Gly) (interchain with G-Cter in ubiquitin) linkage. Residues leucine 62 and valine 65 each coordinate K(+). Residues leucine 62 and valine 65 each contribute to the Na(+) site. Lysine 72 acts as the Nucleophile; Schiff-base intermediate with DNA; for 5'-dRP lyase activity in catalysis. An N6-acetyllysine modification is found at lysine 72. Lysine 81 is covalently cross-linked (Glycyl lysine isopeptide (Lys-Gly) (interchain with G-Cter in ubiquitin)). Position 83 is an omega-N-methylarginine; by PRMT6 (arginine 83). K(+) is bound by residues threonine 101, valine 103, and isoleucine 106. Na(+)-binding residues include threonine 101, valine 103, and isoleucine 106. Arginine 149 contributes to the a 2'-deoxyribonucleoside 5'-triphosphate binding site. An Omega-N-methylarginine; by PRMT6 modification is found at arginine 152. Positions 180, 183, 189, and 190 each coordinate a 2'-deoxyribonucleoside 5'-triphosphate. The interval 183–192 is DNA-binding; the sequence is RGAESSGDMD. Mg(2+) contacts are provided by aspartate 190, aspartate 192, and aspartate 256.

This sequence belongs to the DNA polymerase type-X family. Monomer. Binds single-stranded DNA (ssDNA). Interacts with APEX1, LIG1, LIG3, FEN1, PCNA and XRCC1. Interacts with HUWE1/ARF-BP1, STUB1/CHIP and USP47. Interacts with FAM168A. Mg(2+) is required as a cofactor. In terms of processing, methylation by PRMT6 stimulates the polymerase activity by enhancing DNA binding and processivity. Ubiquitinated at Lys-41, Lys-61 and Lys-81: monoubiquitinated by HUWE1/ARF-BP1. Monoubiquitinated protein is then the target of STUB1/CHIP, which catalyzes polyubiquitination from monoubiquitin, leading to degradation by the proteasome. USP47 mediates the deubiquitination of monoubiquitinated protein, preventing polyubiquitination by STUB1/CHIP and its subsequent degradation.

The protein resides in the nucleus. It localises to the cytoplasm. It catalyses the reaction DNA(n) + a 2'-deoxyribonucleoside 5'-triphosphate = DNA(n+1) + diphosphate. It carries out the reaction a 5'-end 2'-deoxyribose-2'-deoxyribonucleotide-DNA = (2E,4S)-4-hydroxypenten-2-al-5-phosphate + a 5'-end 5'-phospho-2'-deoxyribonucleoside-DNA + H(+). The catalysed reaction is 2'-deoxyribonucleotide-(2'-deoxyribose 5'-phosphate)-2'-deoxyribonucleotide-DNA = a 3'-end 2'-deoxyribonucleotide-(2,3-dehydro-2,3-deoxyribose 5'-phosphate)-DNA + a 5'-end 5'-phospho-2'-deoxyribonucleoside-DNA + H(+). Repair polymerase that plays a key role in base-excision repair. During this process, the damaged base is excised by specific DNA glycosylases, the DNA backbone is nicked at the abasic site by an apurinic/apyrimidic (AP) endonuclease, and POLB removes 5'-deoxyribose-phosphate from the preincised AP site acting as a 5'-deoxyribose-phosphate lyase (5'-dRP lyase); through its DNA polymerase activity, it adds one nucleotide to the 3' end of the arising single-nucleotide gap. Conducts 'gap-filling' DNA synthesis in a stepwise distributive fashion rather than in a processive fashion as for other DNA polymerases. It is also able to cleave sugar-phosphate bonds 3' to an intact AP site, acting as an AP lyase. The chain is DNA polymerase beta (POLB) from Bos taurus (Bovine).